The primary structure comprises 508 residues: MDASSLVKRGSSTHYANLPYGYYVLGVIVFYTIFLIVMRWLIPSRYTKVSPWKNKLLQSIRTASPCFHMPLLLLLVFVPFIHKYSLVAYISLYLKRLGRLSYVLVILNVLLTLRPANPILGYHYLDLIPLHKWLSRFVTVIGIIHGIGFIVKWSLDPKVSMISKATKLFNFIGVIAFVPLFILMFASVRIWRRYSYRSFYVIHQLGQWAMVFLVPIHARPRVTVPYFFILLALYIWRGISYIYYSTTVNVTQRVKDDTSLTYVKLDRSAIRDWLPGSHLRLSKYKKKNPLYWLMPTQPYTIASLPDESQIDLIIRENLTPYVVVGEYTVVDVYSTVPPSLLYDSQRVAIVVGGSGISFGLSIFKYLQTRNLDYLKFIWLIREREDMHILNHCNFETNDLEVYVTRSLPPDDTQTKSMNANGSSEFDDIDFELETMDESGALLTNDSKSPSLVHFGRRLDWQVDLAQFIESHALQNSWLVCCGPESLLTDGERYAKQNYCNFVKEFYDI.

The next 8 helical transmembrane spans lie at 18-38, 70-90, 100-120, 137-157, 168-188, 198-218, 222-242, and 347-367; these read LPYGYYVLGVIVFYTIFLIVM, PLLLLLVFVPFIHKYSLVAYI, LSYVLVILNVLLTLRPANPIL, FVTVIGIIHGIGFIVKWSLDP, LFNFIGVIAFVPLFILMFASV, SFYVIHQLGQWAMVFLVPIHA, VTVPYFFILLALYIWRGISYI, and VAIVVGGSGISFGLSIFKYLQ. The Ferric oxidoreductase domain maps to 97–214; that stretch reads LGRLSYVLVI…LGQWAMVFLV (118 aa). Residues 241-361 form the FAD-binding FR-type domain; that stretch reads YIYYSTTVNV…GGSGISFGLS (121 aa).

The protein belongs to the ferric reductase (FRE) family. AIM14 subfamily.

It localises to the membrane. Functionally, probable cell surface metalloreductase. May be involved in iron or copper homeostasis. In Kluyveromyces lactis (strain ATCC 8585 / CBS 2359 / DSM 70799 / NBRC 1267 / NRRL Y-1140 / WM37) (Yeast), this protein is Probable metalloreductase AIM14 (AIM14).